The sequence spans 82 residues: UPF0180 protein BAA_1480 (82 aa).

The protein belongs to the UPF0180 family.

In Bacillus anthracis (strain A0248), this protein is UPF0180 protein BAA_1480.